Reading from the N-terminus, the 397-residue chain is Acetate kinase 2 (397 aa).

Asparagine 8 contributes to the Mg(2+) binding site. Residue lysine 15 coordinates ATP. Residue arginine 89 participates in substrate binding. The active-site Proton donor/acceptor is aspartate 146. Residues 206 to 210, 281 to 283, and 329 to 333 contribute to the ATP site; these read HLGNG, DFR, and GVGEN. Glutamate 380 contacts Mg(2+).

This sequence belongs to the acetokinase family. As to quaternary structure, homodimer. Mg(2+) serves as cofactor. It depends on Mn(2+) as a cofactor.

It localises to the cytoplasm. The catalysed reaction is acetate + ATP = acetyl phosphate + ADP. Its pathway is metabolic intermediate biosynthesis; acetyl-CoA biosynthesis; acetyl-CoA from acetate: step 1/2. In terms of biological role, catalyzes the formation of acetyl phosphate from acetate and ATP. Can also catalyze the reverse reaction. The chain is Acetate kinase 2 from Listeria monocytogenes serovar 1/2a (strain ATCC BAA-679 / EGD-e).